The primary structure comprises 846 residues: Homeodomain-interacting protein kinase 1 (846 aa).

The disordered stretch occupies residues 47–74 (NPFSIQKAPGTSSDNEQRAPKRRADEEA). A compositionally biased stretch (basic and acidic residues) spans 61–72 (NEQRAPKRRADE). The 337-residue stretch at 147-483 (YEVLEFLGKG…PAEGLESKFV (337 aa)) folds into the Protein kinase domain. ATP contacts are provided by residues 153-161 (LGKGTFGQV) and Lys-176. Asp-272 (proton acceptor) is an active-site residue. The segment at 741–790 (LAAQPKKNSPAPSVITLSSDEDSNGAGSSNSGSTTRTGAVNPVRNDTLPM) is disordered. Over residues 746–757 (KKNSPAPSVITL) the composition is skewed to polar residues. A compositionally biased stretch (low complexity) spans 764 to 773 (NGAGSSNSGS).

This sequence belongs to the protein kinase superfamily. CMGC Ser/Thr protein kinase family. HIPK subfamily. Broadly expressed during embryogenesis. Expression becomes more restricted during larval development. L3 larvae display robust expression in many head and motor neurons, and lower levels of expression in the intestine and the seam cells of the hypodermis. By late L4 stage, expression is largely restricted to neurons and is maintained in nerve cells of the head and nerve cord during adulthood. Expressed in adult pharyngeal cells, hypodermal cells, gonadal sheath cells and distal tip cells but not in germline cells. Expressed in serotonergic neurons such as ADF and NSM and in GABAergic neurons, including RME, RIS and DVB.

The protein resides in the nucleus. It carries out the reaction L-seryl-[protein] + ATP = O-phospho-L-seryl-[protein] + ADP + H(+). It catalyses the reaction L-threonyl-[protein] + ATP = O-phospho-L-threonyl-[protein] + ADP + H(+). In terms of biological role, serine/threonine-protein kinase required in the somatic gonadal cells to regulate germline proliferation during larval development and in adulthood. Plays a role in the development/differentiation of gonadal distal tip cells. Required for normal lifespan in a pha-4 and mxl-2-dependent manner. Also contributes to survival following heat or oxidative stress. Prevents sumoylation and inactivation of heat shock transcription factor hsf-1 which enhances hsf-1-dependent transcriptional induction of chaperones in response to heat shock. Also required for hormetic extension of longevity in response to heat stress. Also contributes to longevity by promoting autophagy under nutrient stress conditions through induction of autophagosome formation and autophagy gene expression. Provides protection against proteotoxic polyglutamine aggregate and the associated locomotory toxicity, probably as a result of kinase activity. Contributes to longevity via gamma-aminobutyric acid (GABA)ergic signaling by promoting autophagy through mxl-2, hlh-30 and daf-16 but independent of hsf-1 and phas-4, to induce autophagosome formation and the expression of autophagy genes. Promotes thermotolerance via serotonergic signaling by serotonergic neurons. Preserves neuronal function in aging animals by mitigating against age-associated decline in axonal and synaptic transmissions. Acts as an activator of nhr-49-dependent hypoxia response, including the up-regulation of fmo-2 and acs-2, the induction of autophagosome formation and expression of autophagy genes. This chain is Homeodomain-interacting protein kinase 1, found in Caenorhabditis elegans.